Reading from the N-terminus, the 671-residue chain is MESRKLISATDIQYSASLLNSLNEQRGHGLFCDVTVIVEDRKFRAHRNILSASSTYFHQLFSVAGQVVELSFIRAEIFAEILNYIYSSKVVRVRADLLDELIKSGQLLGVKFIAELGVPLSQVKSISGTEQDGTAETLPSSSSDKSLDMEKSKDEAQDNGATVMPIITESFSLSAEDNEMKKIIVTDSDDDDDDDVIFCSEILPAKEDLPSNNTATQVQPNPASVAISEVTPCASNNSPPVTNITPTQLPTPVNQATLSQTQGSEELLVSSASTHLTPNIILLNQAPLTAPPSASSSLPNHMSSSVNVLVQNQQTPNSAVLTGNKAEEEEEIIDDDDDIISSSPDSAVSNTSLVPQADNSKSTTLDGSLTQKMQIPVLPQEPPSNSLKISDVITRNTNDPGLRSKHVMEGQKIITLDTATEIEGLSTGCKVYANIGEDTYDIVIPVKDDPDGGEAKLDNELPKTSGSEPPNKRMKVKHDDHYELIVDGRVYYICIVCKRSYVCLTSLRRHFNIHSWEKKYQCRYCDKVFPLAEYRTKHEIHHTGERRYQCLTCGKSFINYQFMSSHIKSVHSQDPSGDSKLYRLHPCKSLQIRQYAYLSNKSSAMPVMKDDAVGYKVDAGKEPPVGTTSTPPQNKSTFWEDIFIQQENDSIFKQNVTDGSTEFEFIIPESY.

The interval 1-103 (MESRKLISAT…RADLLDELIK (103 aa)) is interaction with NCOR1. Residues 1–136 (MESRKLISAT…SGTEQDGTAE (136 aa)) form a self-association region. In terms of domain architecture, BTB spans 32-94 (CDVTVIVEDR…IYSSKVVRVR (63 aa)). Polar residues predominate over residues 127–144 (SGTEQDGTAETLPSSSSD). The disordered stretch occupies residues 127–161 (SGTEQDGTAETLPSSSSDKSLDMEKSKDEAQDNGA). The span at 145–156 (KSLDMEKSKDEA) shows a compositional bias: basic and acidic residues. Residues K151 and K153 each participate in a glycyl lysine isopeptide (Lys-Gly) (interchain with G-Cter in SUMO2) cross-link. The residue at position 251 (T251) is a Phosphothreonine. Residues 298–571 (LPNHMSSSVN…FMSSHIKSVH (274 aa)) form an interaction with CBFA2T3 region. Residues 332–365 (IIDDDDDIISSSPDSAVSNTSLVPQADNSKSTTL) form a disordered region. Residues 347 to 365 (AVSNTSLVPQADNSKSTTL) are compositionally biased toward polar residues. Residues K388, K405, K412, and K447 each participate in a glycyl lysine isopeptide (Lys-Gly) (interchain with G-Cter in SUMO2) cross-link. Positions 451–461 (DGGEAKLDNEL) are enriched in basic and acidic residues. The interval 451–474 (DGGEAKLDNELPKTSGSEPPNKRM) is disordered. Positions 452–671 (GGEAKLDNEL…EFEFIIPESY (220 aa)) are interaction with CTNND1. Residues K463, K472, and K477 each participate in a glycyl lysine isopeptide (Lys-Gly) (interchain with G-Cter in SUMO2) cross-link. The Nuclear localization signal signature appears at 469-478 (PPNKRMKVKH). 3 consecutive C2H2-type zinc fingers follow at residues 492–514 (YICI…FNIH), 520–542 (YQCR…EIHH), and 548–571 (YQCL…KSVH). Positions 512-637 (NIHSWEKKYQ…TSTPPQNKST (126 aa)) are required for DNA-binding. Residues K537, K568, K580, K609, and K616 each participate in a glycyl lysine isopeptide (Lys-Gly) (interchain with G-Cter in SUMO2) cross-link.

As to quaternary structure, interacts with NCOR1. Self-associates. Interacts with CTNND1, and this interaction inhibits binding to both methylated and non-methylated DNA. Interacts with CTNND2. Interacts with KPNA2/RCH1, which may mediate nuclear import of this protein. Interacts with CBFA2T3. As to expression, expressed in brain, heart, kidney, liver, lung, neuromuscular junctions, skeletal muscle, spleen and testis.

It localises to the nucleus. Its function is as follows. Transcriptional regulator with bimodal DNA-binding specificity. Binds to methylated CpG dinucleotides in the consensus sequence 5'-CGCG-3' and also binds to the non-methylated consensus sequence 5'-CTGCNA-3' also known as the consensus kaiso binding site (KBS). May recruit the N-CoR repressor complex to promote histone deacetylation and the formation of repressive chromatin structures in target gene promoters. Contributes to the repression of target genes of the Wnt signaling pathway. May also activate transcription of a subset of target genes by the recruitment of CTNND2. Represses expression of MMP7 in conjunction with transcriptional corepressors CBFA2T3, CBFA2T2 and RUNX1T1. This Mus musculus (Mouse) protein is Transcriptional regulator Kaiso (Zbtb33).